Here is a 212-residue protein sequence, read N- to C-terminus: UPF0111 protein PH1389 (212 aa).

It belongs to the UPF0111 family.

This Pyrococcus horikoshii (strain ATCC 700860 / DSM 12428 / JCM 9974 / NBRC 100139 / OT-3) protein is UPF0111 protein PH1389.